Consider the following 415-residue polypeptide: MSFDINWSELVSDESLNESIKEFLDNQFQSISLPSFIDNLSVSDFSLGNSPPEITIRHIGDPFDDFYEDEGDDDEKERKNVYMQQGVSEDTNSSDDDEDDEYDGDRSNDLSIITEDPNIHTFTSEADRSRLASPPRPPLTDLRRSRASSDPFSLIMGNNNLNYMHNYNMNYVGLGNLNATGTHTGTDTPTNILNQNPYATLKSNPSSYYKNKDPSKFSGSDTHKNGFRLTSKEPCSTRGENDIQLIAEVKYNGDLHLELTVNLLVNYPSPNFISLPIKLHVTDLVIHSIITIAYLKNSVFFSFLCDVNDINSDYFTSSTQNSTPEHMGATNTGGNFVDYVSGPINRERIDIIKKVKIESEIGEAEQNALRNVGKVERFLVEQLRNIIRDEFAWPSWVCFDLNEDDDDESDDQEEN.

The SMP-LTD domain occupies 1 to 402 (MSFDINWSEL…WPSWVCFDLN (402 aa)). The segment at 53–146 (EITIRHIGDP…PPLTDLRRSR (94 aa)) is disordered. Acidic residues-rich tracts occupy residues 62–75 (PFDD…DDDE) and 92–103 (NSSDDDEDDEYD).

This sequence belongs to the MDM12 family. In terms of assembly, component of the ER-mitochondria encounter structure (ERMES) or MDM complex, composed of MMM1, MDM10, MDM12 and MDM34. An MMM1 homodimer associates with one molecule of MDM12 on each side in a pairwise head-to-tail manner, and the SMP-LTD domains of MMM1 and MDM12 generate a continuous hydrophobic tunnel for phospholipid trafficking.

The protein localises to the mitochondrion outer membrane. The protein resides in the endoplasmic reticulum membrane. Its function is as follows. Component of the ERMES/MDM complex, which serves as a molecular tether to connect the endoplasmic reticulum (ER) and mitochondria. Components of this complex are involved in the control of mitochondrial shape and protein biogenesis, and function in nonvesicular lipid trafficking between the ER and mitochondria. MDM12 is required for the interaction of the ER-resident membrane protein MMM1 and the outer mitochondrial membrane-resident beta-barrel protein MDM10. The MDM12-MMM1 subcomplex functions in the major beta-barrel assembly pathway that is responsible for biogenesis of all mitochondrial outer membrane beta-barrel proteins, and acts in a late step after the SAM complex. The MDM10-MDM12-MMM1 subcomplex further acts in the TOM40-specific pathway after the action of the MDM12-MMM1 complex. Essential for establishing and maintaining the structure of mitochondria and maintenance of mtDNA nucleoids. This Debaryomyces hansenii (strain ATCC 36239 / CBS 767 / BCRC 21394 / JCM 1990 / NBRC 0083 / IGC 2968) (Yeast) protein is Mitochondrial distribution and morphology protein 12.